A 306-amino-acid chain; its full sequence is Glutathione transport system permease protein GsiC (306 aa).

At 1–8 (MLNYVIKR) the chain is on the cytoplasmic side. Residues 9-29 (LLGLIPTLFIVSVLVFLFVHM) form a helical membrane-spanning segment. Topologically, residues 30-102 (LPGDPARLIA…SRFMPTLWLT (73 aa)) are periplasmic. The ABC transmembrane type-1 domain maps to 95–292 (FMPTLWLTIT…LEFILINLVV (198 aa)). Residues 103–123 (ITSMVWAVIFGMAAGIIAAVW) traverse the membrane as a helical segment. The Cytoplasmic portion of the chain corresponds to 124–134 (RNRWPDRLSMT). The chain crosses the membrane as a helical span at residues 135–155 (IAVSGISFPAFALGMLLIQVF). The Periplasmic segment spans residues 156–168 (SVELGWLPTVGAD). The chain crosses the membrane as a helical span at residues 169–189 (SWQHYILPSLTLGAAVAAVMA). Residues 190–228 (RFTRASFVDVLSEDYMRTARAKGVSETWVVLKHGLRNAM) are Cytoplasmic-facing. A helical transmembrane segment spans residues 229–249 (IPVVTMMGLQFGFLLGGSIVV). The Periplasmic segment spans residues 250–277 (EKVFNWPGLGRLLVDSVEMRDYPVIQAE). Residues 278–298 (ILLFSLEFILINLVVDVLYAA) form a helical membrane-spanning segment. Topologically, residues 299-306 (INPAIRYK) are cytoplasmic.

It belongs to the binding-protein-dependent transport system permease family. In terms of assembly, the complex is composed of two ATP-binding proteins (GsiA), two transmembrane proteins (GsiC and GsiD) and a solute-binding protein (GsiB).

The protein resides in the cell inner membrane. Functionally, part of the ABC transporter complex GsiABCD involved in glutathione import. Probably responsible for the translocation of the substrate across the membrane. The chain is Glutathione transport system permease protein GsiC from Escherichia coli O1:K1 / APEC.